Reading from the N-terminus, the 588-residue chain is Secreted triacylglycerol lipase LIP1 (588 aa).

An N-terminal signal peptide occupies residues 1-20 (MRFSGFVSGLGLGLLTAVSA). The Acyl-ester intermediate role is filled by Ser-258. Asn-400 is a glycosylation site (N-linked (GlcNAc...) asparagine).

Belongs to the type-B carboxylesterase/lipase family.

Its subcellular location is the secreted. It catalyses the reaction a triacylglycerol + H2O = a diacylglycerol + a fatty acid + H(+). Secreted acylglycerol lipase required for efficient utilization of saturated triglyceride lipids. Is not involved in virulence. The polypeptide is Secreted triacylglycerol lipase LIP1 (Gibberella zeae (strain ATCC MYA-4620 / CBS 123657 / FGSC 9075 / NRRL 31084 / PH-1) (Wheat head blight fungus)).